Here is a 187-residue protein sequence, read N- to C-terminus: UPF0340 protein SMU_87 (187 aa).

Belongs to the UPF0340 family.

The polypeptide is UPF0340 protein SMU_87 (Streptococcus mutans serotype c (strain ATCC 700610 / UA159)).